Here is a 212-residue protein sequence, read N- to C-terminus: Thiamine-phosphate synthase (212 aa).

4-amino-2-methyl-5-(diphosphooxymethyl)pyrimidine-binding positions include 39–41 (QLR) and asparagine 71. Positions 72 and 91 each coordinate Mg(2+). Residue serine 110 participates in 4-amino-2-methyl-5-(diphosphooxymethyl)pyrimidine binding. 136-138 (TGT) is a binding site for 2-[(2R,5Z)-2-carboxy-4-methylthiazol-5(2H)-ylidene]ethyl phosphate. Position 139 (lysine 139) interacts with 4-amino-2-methyl-5-(diphosphooxymethyl)pyrimidine. Residues glycine 167 and 187 to 188 (VS) contribute to the 2-[(2R,5Z)-2-carboxy-4-methylthiazol-5(2H)-ylidene]ethyl phosphate site.

It belongs to the thiamine-phosphate synthase family. Mg(2+) serves as cofactor.

The catalysed reaction is 2-[(2R,5Z)-2-carboxy-4-methylthiazol-5(2H)-ylidene]ethyl phosphate + 4-amino-2-methyl-5-(diphosphooxymethyl)pyrimidine + 2 H(+) = thiamine phosphate + CO2 + diphosphate. The enzyme catalyses 2-(2-carboxy-4-methylthiazol-5-yl)ethyl phosphate + 4-amino-2-methyl-5-(diphosphooxymethyl)pyrimidine + 2 H(+) = thiamine phosphate + CO2 + diphosphate. It carries out the reaction 4-methyl-5-(2-phosphooxyethyl)-thiazole + 4-amino-2-methyl-5-(diphosphooxymethyl)pyrimidine + H(+) = thiamine phosphate + diphosphate. The protein operates within cofactor biosynthesis; thiamine diphosphate biosynthesis; thiamine phosphate from 4-amino-2-methyl-5-diphosphomethylpyrimidine and 4-methyl-5-(2-phosphoethyl)-thiazole: step 1/1. Condenses 4-methyl-5-(beta-hydroxyethyl)thiazole monophosphate (THZ-P) and 2-methyl-4-amino-5-hydroxymethyl pyrimidine pyrophosphate (HMP-PP) to form thiamine monophosphate (TMP). The polypeptide is Thiamine-phosphate synthase (Azorhizobium caulinodans (strain ATCC 43989 / DSM 5975 / JCM 20966 / LMG 6465 / NBRC 14845 / NCIMB 13405 / ORS 571)).